Here is a 467-residue protein sequence, read N- to C-terminus: Cytochrome c-552 (467 aa).

A signal peptide spans 1-27 (MVKKLTGKSFALSALVAASFVAAGAMA). Residue histidine 87 coordinates heme c. The heme site is built by cysteine 115, cysteine 118, and lysine 119. Residues cysteine 153, cysteine 156, histidine 157, cysteine 195, cysteine 198, and histidine 199 each contribute to the heme c site. Residues glutamate 201, tyrosine 202, lysine 250, and glutamine 252 each coordinate Ca(2+). Tyrosine 202 serves as a coordination point for substrate. Histidine 253 provides a ligand contact to substrate. Residues histidine 264, cysteine 271, cysteine 274, histidine 275, histidine 290, cysteine 303, cysteine 306, histidine 307, and histidine 382 each coordinate heme c.

This sequence belongs to the cytochrome c-552 family. It depends on Ca(2+) as a cofactor. The cofactor is heme c.

The protein localises to the periplasm. It carries out the reaction 6 Fe(III)-[cytochrome c] + NH4(+) + 2 H2O = 6 Fe(II)-[cytochrome c] + nitrite + 8 H(+). It participates in nitrogen metabolism; nitrate reduction (assimilation). In terms of biological role, catalyzes the reduction of nitrite to ammonia, consuming six electrons in the process. The sequence is that of Cytochrome c-552 from Shewanella amazonensis (strain ATCC BAA-1098 / SB2B).